We begin with the raw amino-acid sequence, 527 residues long: Dual specificity protein kinase shkA (527 aa).

The region spanning 45–304 is the Protein kinase domain; that stretch reads ITTESILGDG…GIVSELEEII (260 aa). ATP contacts are provided by residues 51–59 and Lys72; that span reads LGDGSFGTV. The active-site Proton acceptor is the Asp167. Residues 424–513 enclose the SH2 domain; it reads WFHGDISTSE…INTPCLGSRF (90 aa).

The protein belongs to the protein kinase superfamily. TKL Ser/Thr protein kinase family. SH2 domain-containing protein kinase subfamily.

It localises to the membrane. The enzyme catalyses L-seryl-[protein] + ATP = O-phospho-L-seryl-[protein] + ADP + H(+). It catalyses the reaction L-threonyl-[protein] + ATP = O-phospho-L-threonyl-[protein] + ADP + H(+). In terms of biological role, required for proper chemotaxis and phagocytosis; proper spatiotemporal control of F-actin levels in chemotaxing cells. Negative regulator of the PI3K (phosphatidylinositol 3 kinase) pathway. Predominantly phosphorylates serines and threonines and tyrosines at a lower level. The chain is Dual specificity protein kinase shkA (shkA) from Dictyostelium discoideum (Social amoeba).